Reading from the N-terminus, the 101-residue chain is NADH-quinone oxidoreductase subunit K (101 aa).

The next 3 membrane-spanning stretches (helical) occupy residues 4 to 24 (LSHYLILGAVLFAISVVGIFL), 30 to 50 (IVLLMAIELMLLAVNLNFIAF), and 61 to 81 (VFVFFILTVAAAESAIGLAIL).

This sequence belongs to the complex I subunit 4L family. As to quaternary structure, NDH-1 is composed of 14 different subunits. Subunits NuoA, H, J, K, L, M, N constitute the membrane sector of the complex.

The protein resides in the cell inner membrane. The catalysed reaction is a quinone + NADH + 5 H(+)(in) = a quinol + NAD(+) + 4 H(+)(out). Functionally, NDH-1 shuttles electrons from NADH, via FMN and iron-sulfur (Fe-S) centers, to quinones in the respiratory chain. The immediate electron acceptor for the enzyme in this species is believed to be ubiquinone. Couples the redox reaction to proton translocation (for every two electrons transferred, four hydrogen ions are translocated across the cytoplasmic membrane), and thus conserves the redox energy in a proton gradient. The chain is NADH-quinone oxidoreductase subunit K from Azoarcus sp. (strain BH72).